We begin with the raw amino-acid sequence, 229 residues long: Cytidylate kinase (229 aa).

10-18 (GHSSSGKST) contributes to the ATP binding site.

Belongs to the cytidylate kinase family. Type 1 subfamily.

The protein localises to the cytoplasm. The catalysed reaction is CMP + ATP = CDP + ADP. The enzyme catalyses dCMP + ATP = dCDP + ADP. The protein is Cytidylate kinase of Parabacteroides distasonis (strain ATCC 8503 / DSM 20701 / CIP 104284 / JCM 5825 / NCTC 11152).